A 593-amino-acid polypeptide reads, in one-letter code: NADH-quinone oxidoreductase subunit C/D (593 aa).

The NADH dehydrogenase I subunit C stretch occupies residues 1–184 (MTADNAIFIP…DPYSLTLAKQ (184 aa)). Residues 208-593 (DYMFLNLGPN…IDFVMADVDR (386 aa)) form an NADH dehydrogenase I subunit D region.

The protein in the N-terminal section; belongs to the complex I 30 kDa subunit family. In the C-terminal section; belongs to the complex I 49 kDa subunit family. NDH-1 is composed of 13 different subunits. Subunits NuoB, CD, E, F, and G constitute the peripheral sector of the complex.

The protein resides in the cell inner membrane. The catalysed reaction is a quinone + NADH + 5 H(+)(in) = a quinol + NAD(+) + 4 H(+)(out). In terms of biological role, NDH-1 shuttles electrons from NADH, via FMN and iron-sulfur (Fe-S) centers, to quinones in the respiratory chain. The immediate electron acceptor for the enzyme in this species is believed to be ubiquinone. Couples the redox reaction to proton translocation (for every two electrons transferred, four hydrogen ions are translocated across the cytoplasmic membrane), and thus conserves the redox energy in a proton gradient. In Pseudomonas putida (strain GB-1), this protein is NADH-quinone oxidoreductase subunit C/D.